Here is a 327-residue protein sequence, read N- to C-terminus: 2-oxoisovalerate dehydrogenase subunit beta (327 aa).

Residues Glu29, 58–60, Gln82, and 86–89 contribute to the thiamine diphosphate site; these read LAE and FIMP. Substrate-binding positions include 83–86 and His129; that span reads FADF. His129 functions as the Proton acceptor in the catalytic mechanism.

As to quaternary structure, heterotetramer of two alpha and two beta chains. Directly associated with ODBA in the E1 complex. Thiamine diphosphate is required as a cofactor.

The catalysed reaction is N(6)-[(R)-lipoyl]-L-lysyl-[protein] + 3-methyl-2-oxobutanoate + H(+) = N(6)-[(R)-S(8)-2-methylpropanoyldihydrolipoyl]-L-lysyl-[protein] + CO2. In terms of biological role, the branched-chain alpha-keto dehydrogenase complex catalyzes the overall conversion of alpha-keto acids to acyl-CoA and CO(2). It contains multiple copies of three enzymatic components: branched-chain alpha-keto acid decarboxylase (E1), lipoamide acyltransferase (E2) and lipoamide dehydrogenase (E3). The protein is 2-oxoisovalerate dehydrogenase subunit beta (bfmBAB) of Bacillus subtilis (strain 168).